Consider the following 182-residue polypeptide: UPF0397 protein BcerKBAB4_2500 (182 aa).

The next 5 membrane-spanning stretches (helical) occupy residues 9 to 29 (VVAI…GFSI), 40 to 60 (AILT…IGLI), 71 to 91 (WGIW…MGLI), 114 to 134 (IAGL…DIIV), and 142 to 162 (IVIQ…VLGL).

Belongs to the UPF0397 family.

The protein resides in the cell membrane. This chain is UPF0397 protein BcerKBAB4_2500, found in Bacillus mycoides (strain KBAB4) (Bacillus weihenstephanensis).